The chain runs to 250 residues: Cobalt transport protein CbiM (250 aa).

Residues 1–27 (MKKPLFFIASACVTIYILFALSPSVYA) form the signal peptide. The next 6 membrane-spanning stretches (helical) occupy residues 33-53 (GFLP…FFLV), 70-90 (LLLA…IPSV), 102-122 (LGAL…VLLF), 134-154 (TLGA…YVLF), 168-188 (VFLA…IQLA), and 208-228 (IFAV…VVVW).

This sequence belongs to the CbiM family. As to quaternary structure, forms an energy-coupling factor (ECF) transporter complex composed of an ATP-binding protein (A component, CbiO), a transmembrane protein (T component, CbiQ) and 2 possible substrate-capture proteins (S components, CbiM and CbiN) of unknown stoichimetry.

It localises to the cell membrane. The protein operates within cofactor biosynthesis; adenosylcobalamin biosynthesis. Its function is as follows. Part of the energy-coupling factor (ECF) transporter complex CbiMNOQ involved in cobalt import. This is Cobalt transport protein CbiM from Anoxybacillus flavithermus (strain DSM 21510 / WK1).